A 431-amino-acid polypeptide reads, in one-letter code: Dihydroorotase (431 aa).

Zn(2+) is bound by residues His59 and His61. Residues 61–63 (HLR) and Asn93 contribute to the substrate site. Zn(2+) contacts are provided by Asp151, His178, His231, and Asp304. Asp304 is a catalytic residue. Substrate-binding positions include His308 and 322-323 (FG).

This sequence belongs to the metallo-dependent hydrolases superfamily. DHOase family. Class I DHOase subfamily. It depends on Zn(2+) as a cofactor.

It catalyses the reaction (S)-dihydroorotate + H2O = N-carbamoyl-L-aspartate + H(+). It functions in the pathway pyrimidine metabolism; UMP biosynthesis via de novo pathway; (S)-dihydroorotate from bicarbonate: step 3/3. Its function is as follows. Catalyzes the reversible cyclization of carbamoyl aspartate to dihydroorotate. In Caldanaerobacter subterraneus subsp. tengcongensis (strain DSM 15242 / JCM 11007 / NBRC 100824 / MB4) (Thermoanaerobacter tengcongensis), this protein is Dihydroorotase.